The chain runs to 410 residues: Lissencephaly-1 homolog A (410 aa).

The LisH domain maps to 7–39; that stretch reads QRDELNRAIADYLRSNGYEEAYSVFKKEAELDM. Positions 56–83 form a coiled coil; that stretch reads TSVIRLQKKVMELESKLNEAKEEINIGG. WD repeat units lie at residues 106–145, 148–187, 190–229, 232–271, 274–333, 336–375, and 378–410; these read GHRSPVTRVIFHPVFSVIVSASEDATIKVWDHETGDFERT, GHTDSVQDISFDHTGKLLASCSADMTIKLWDFQGFECIRT, GHDHNVSSVAIMPNGDHIVSASRDKTIKMWEVATGYCVKT, GHREWVRMVRPNQDGTLIASSSNDQTVRVWVVATKECKAE, EHEH…CLMT, GHDNWVRGVLVHPGGKYIVSCADDKTLRIWDYKNKRCTKT, and AHEHFVTSLDFHKTAPYVVTGSVDQTVKVWECR.

Belongs to the WD repeat LIS1/nudF family. In terms of assembly, can self-associate. Component of the cytosolic PAF-AH (I) heterotetrameric enzyme, which is composed of PAFAH1B1 (beta), PAFAH1B2 (alpha2) and PAFAH1B3 (alpha1) subunits. The catalytic activity of the enzyme resides in the alpha1 (PAFAH1B3) and alpha2 (PAFAH1B2) subunits, whereas the beta subunit (PAFAH1B1) has regulatory activity. Trimer formation is not essential for the catalytic activity. Interacts with dynein, dynactin, nde1 and ndel1.

The protein localises to the cytoplasm. Its subcellular location is the cytoskeleton. It localises to the microtubule organizing center. It is found in the centrosome. In terms of biological role, regulatory subunit (beta subunit) of the cytosolic type I platelet-activating factor (PAF) acetylhydrolase (PAF-AH (I)), an enzyme that catalyzes the hydrolyze of the acetyl group at the sn-2 position of PAF and its analogs and participates in PAF inactivation. Regulates the PAF-AH (I) activity in a catalytic dimer composition-dependent manner. Positively regulates the activity of the minus-end directed microtubule motor protein dynein. May enhance dynein-mediated microtubule sliding by targeting dynein to the microtubule plus end. Required for several dynein- and microtubule-dependent processes such as the maintenance of Golgi integrity, the peripheral transport of microtubule fragments and the coupling of the nucleus and centrosome. May be required for proliferation of neuronal precursors and neuronal migration. This is Lissencephaly-1 homolog A (pafah1b1a) from Danio rerio (Zebrafish).